The following is a 262-amino-acid chain: Putative hydroxypyruvate isomerase (262 aa).

Active-site proton donor/acceptor residues include Glu-146 and Glu-244.

It belongs to the hyi family.

The enzyme catalyses 3-hydroxypyruvate = 2-hydroxy-3-oxopropanoate. In terms of biological role, catalyzes the reversible isomerization between hydroxypyruvate and 2-hydroxy-3-oxopropanoate (also termed tartronate semialdehyde). This Caenorhabditis elegans protein is Putative hydroxypyruvate isomerase.